The sequence spans 405 residues: Sesquiterpene synthase 16 (405 aa).

Aspartate 155, aspartate 159, and glutamate 309 together coordinate Mg(2+). A DDXXD motif motif is present at residues 155-159 (DDTYD).

This sequence belongs to the terpene synthase family. Tpsa subfamily. It depends on Mg(2+) as a cofactor. Requires Mn(2+) as cofactor.

The protein operates within secondary metabolite biosynthesis; terpenoid biosynthesis. In terms of biological role, sesquiterpene synthase involved in the biosynthesis of volatile compounds. No activity detected with geranyl diphosphate (GPP) and farnesyl diphosphate (FPP) as substrates. In Solanum habrochaites (Wild tomato), this protein is Sesquiterpene synthase 16.